A 179-amino-acid chain; its full sequence is Crossover junction endodeoxyribonuclease RuvC (179 aa).

Active-site residues include D7, E67, and D140. Mg(2+) contacts are provided by D7, E67, and D140.

Belongs to the RuvC family. Homodimer which binds Holliday junction (HJ) DNA. The HJ becomes 2-fold symmetrical on binding to RuvC with unstacked arms; it has a different conformation from HJ DNA in complex with RuvA. In the full resolvosome a probable DNA-RuvA(4)-RuvB(12)-RuvC(2) complex forms which resolves the HJ. The cofactor is Mg(2+).

It is found in the cytoplasm. The enzyme catalyses Endonucleolytic cleavage at a junction such as a reciprocal single-stranded crossover between two homologous DNA duplexes (Holliday junction).. In terms of biological role, the RuvA-RuvB-RuvC complex processes Holliday junction (HJ) DNA during genetic recombination and DNA repair. Endonuclease that resolves HJ intermediates. Cleaves cruciform DNA by making single-stranded nicks across the HJ at symmetrical positions within the homologous arms, yielding a 5'-phosphate and a 3'-hydroxyl group; requires a central core of homology in the junction. The consensus cleavage sequence is 5'-(A/T)TT(C/G)-3'. Cleavage occurs on the 3'-side of the TT dinucleotide at the point of strand exchange. HJ branch migration catalyzed by RuvA-RuvB allows RuvC to scan DNA until it finds its consensus sequence, where it cleaves and resolves the cruciform DNA. The protein is Crossover junction endodeoxyribonuclease RuvC of Salinibacter ruber (strain DSM 13855 / M31).